A 2527-amino-acid polypeptide reads, in one-letter code: Leucine-rich repeat serine/threonine-protein kinase 2 (2527 aa).

The required for RAB29-mediated activation stretch occupies residues 1 to 969; sequence MASGSCQGCE…RSSKLQSHMR (969 aa). A coiled-coil region spans residues 319–348; it reads LTETIFLNQDLEEKNENQENDDEGEEDKLF. S910, S935, S955, and S973 each carry phosphoserine. LRR repeat units follow at residues 983–1004, 1012–1033, 1036–1057, 1059–1080, 1084–1105, 1108–1129, 1130–1150, 1156–1171, 1174–1196, 1197–1218, 1221–1245, 1246–1267, and 1269–1291; these read YITSLDLSANELRDIDALSQKC, HLEKLELHQNALTSFPQQLCET, SLTHLDLHSNKFTSFPSYLLKM, CIANLDVSRNDIGPSVVLDPTV, TLKQFNLSYNQLSFVPENLTDV, KLEQLILEGNKISGICSPLRLK, ELKILNLSKNHISSLSENFLE, ESFSARMNFLAAMPFL, SMTILKLSQNKFSCIPEAILNLP, HLRSLDMSSNDIQYLPGPAHWK, NLRELLFSHNQISILDLSEKAYLWS, RVEKLHLSHNKLKEIPPEIGCL, and NLTSLDVSYNLELRSFPNEMGKL. A Phosphoserine; by autocatalysis modification is found at S1292. Residues 1328–1511 form the Roc domain; that stretch reads KAVPYNRMKL…KTIINESLNF (184 aa). 1341–1348 provides a ligand contact to GTP; that stretch reads GNTGSGKT. Residue S1444 is modified to Phosphoserine. The 195-residue stretch at 1546 to 1740 folds into the COR domain; that stretch reads PVIDRKRLLQ…RMYWRQGIYL (195 aa). One can recognise a Protein kinase domain in the interval 1879–2138; the sequence is QAPEFLLGDG…FDILNSAELV (260 aa). The ATP site is built by L1885, D1887, G1888, G1891, V1893, A1904, K1906, M1947, E1948, A1950, S1954, and R1957. The active-site Proton acceptor is D1994. H1998, L2001, A2016, and D2017 together coordinate ATP. 2098-2121 contributes to the GTP binding site; the sequence is EYGCAPWPMVEKLIKQCLKENPQE. 7 WD repeats span residues 2139–2183, 2188–2228, 2233–2276, 2281–2327, 2333–2377, 2402–2438, and 2443–2497; these read CLTR…SFLD, GYTS…LVIN, KKRH…AIFE, KLKG…FSFS, QKLI…EVWD, KESKHKMSYSGRVKTLCLQKNTALWIGTGGGHILLLD, and RLIR…TVWD. Residue 2295 to 2298 participates in GTP binding; the sequence is NVST.

It belongs to the protein kinase superfamily. TKL Ser/Thr protein kinase family. As to quaternary structure, homodimer. Homotetramer; when activated by GTP-bound RAB29. Interacts with PRKN, PRDX3, and TPCN2. Interacts with VPS35. Interacts (via N-terminus) with RAB29; this interaction is direct and stimulates kinase activity. Interacts (via ROC domain) with SEC16A. Interacts with APP; interaction promotes phosphorylation of 'Thr-743' of APP. Interacts with MAPT. Interacts with RAB8A, RAB10, and RAB12. Interacts (via N-terminus) with RAB32. Interacts with YWHAG; this interaction is dependent on phosphorylation of Ser-910 and either Ser-935 or Ser-1444. Interacts with SFN; this interaction is dependent on phosphorylation of Ser-910 and/or Ser-935. Requires Mg(2+) as cofactor. In terms of processing, autophosphorylated at Ser-1292; autophosphorylation is stimulated by RAB29. Phosphorylation of Ser-910 and either Ser-935 or Ser-1444 facilitates interaction with YWHAG. Phosphorylation of Ser-910 and/or Ser-935 facilitates interaction with SFN. Post-translationally, ubiquitinated by TRIM1; undergoes 'Lys-48'-linked polyubiquitination leading to proteasomal degradation. In terms of tissue distribution, expressed in pyramidal neurons in all cortical laminae of the visual cortex, in neurons of the substantia nigra pars compacta and caudate putamen (at protein level). Expressed in neutrophils (at protein level). Expressed in the brain. Expressed throughout the adult brain, but at a lower level than in heart and liver. Also expressed in placenta, lung, skeletal muscle, kidney and pancreas. In the brain, expressed in the cerebellum, cerebral cortex, medulla, spinal cord occipital pole, frontal lobe, temporal lobe and putamen. Expression is particularly high in brain dopaminoceptive areas.

It localises to the cytoplasmic vesicle. The protein localises to the perikaryon. The protein resides in the golgi apparatus membrane. It is found in the cell projection. Its subcellular location is the axon. It localises to the dendrite. The protein localises to the endoplasmic reticulum membrane. The protein resides in the secretory vesicle. It is found in the synaptic vesicle membrane. Its subcellular location is the endosome. It localises to the lysosome. The protein localises to the mitochondrion outer membrane. The protein resides in the cytoplasm. It is found in the cytoskeleton. Its subcellular location is the phagosome. The catalysed reaction is L-threonyl-[protein] + ATP = O-phospho-L-threonyl-[protein] + ADP + H(+). It catalyses the reaction L-seryl-[protein] + ATP = O-phospho-L-seryl-[protein] + ADP + H(+). The enzyme catalyses GTP + H2O = GDP + phosphate + H(+). With respect to regulation, kinase activity is regulated by the GTPase activity of the ROC domain. GTP-bound LRRK2 kinase activity is stimulated by RAB29. Phosphorylation of RAB10 'Thr-73' is stimulated by RAB29 and RAB32. Inhibited by small molecule inhibitor MLi-2. Serine/threonine-protein kinase which phosphorylates a broad range of proteins involved in multiple processes such as neuronal plasticity, innate immunity, autophagy, and vesicle trafficking. Is a key regulator of RAB GTPases by regulating the GTP/GDP exchange and interaction partners of RABs through phosphorylation. Phosphorylates RAB3A, RAB3B, RAB3C, RAB3D, RAB5A, RAB5B, RAB5C, RAB8A, RAB8B, RAB10, RAB12, RAB29, RAB35, and RAB43. Regulates the RAB3IP-catalyzed GDP/GTP exchange for RAB8A through the phosphorylation of 'Thr-72' on RAB8A. Inhibits the interaction between RAB8A and GDI1 and/or GDI2 by phosphorylating 'Thr-72' on RAB8A. Regulates primary ciliogenesis through phosphorylation of RAB8A and RAB10, which promotes SHH signaling in the brain. Together with RAB29, plays a role in the retrograde trafficking pathway for recycling proteins, such as mannose-6-phosphate receptor (M6PR), between lysosomes and the Golgi apparatus in a retromer-dependent manner. Regulates neuronal process morphology in the intact central nervous system (CNS). Plays a role in synaptic vesicle trafficking. Plays an important role in recruiting SEC16A to endoplasmic reticulum exit sites (ERES) and in regulating ER to Golgi vesicle-mediated transport and ERES organization. Positively regulates autophagy through a calcium-dependent activation of the CaMKK/AMPK signaling pathway. The process involves activation of nicotinic acid adenine dinucleotide phosphate (NAADP) receptors, increase in lysosomal pH, and calcium release from lysosomes. Phosphorylates PRDX3. By phosphorylating APP on 'Thr-743', which promotes the production and the nuclear translocation of the APP intracellular domain (AICD), regulates dopaminergic neuron apoptosis. Acts as a positive regulator of innate immunity by mediating phosphorylation of RIPK2 downstream of NOD1 and NOD2, thereby enhancing RIPK2 activation. Independent of its kinase activity, inhibits the proteasomal degradation of MAPT, thus promoting MAPT oligomerization and secretion. In addition, has GTPase activity via its Roc domain which regulates LRRK2 kinase activity. Recruited by RAB29/RAB7L1 to overloaded lysosomes where it phosphorylates and stabilizes RAB8A and RAB10 which promote lysosomal content release and suppress lysosomal enlargement through the EHBP1 and EHBP1L1 effector proteins. In Homo sapiens (Human), this protein is Leucine-rich repeat serine/threonine-protein kinase 2 (LRRK2).